A 349-amino-acid chain; its full sequence is S-adenosylmethionine:tRNA ribosyltransferase-isomerase (349 aa).

It belongs to the QueA family. As to quaternary structure, monomer.

The protein resides in the cytoplasm. It carries out the reaction 7-aminomethyl-7-carbaguanosine(34) in tRNA + S-adenosyl-L-methionine = epoxyqueuosine(34) in tRNA + adenine + L-methionine + 2 H(+). It participates in tRNA modification; tRNA-queuosine biosynthesis. In terms of biological role, transfers and isomerizes the ribose moiety from AdoMet to the 7-aminomethyl group of 7-deazaguanine (preQ1-tRNA) to give epoxyqueuosine (oQ-tRNA). The protein is S-adenosylmethionine:tRNA ribosyltransferase-isomerase of Parabacteroides distasonis (strain ATCC 8503 / DSM 20701 / CIP 104284 / JCM 5825 / NCTC 11152).